The following is a 231-amino-acid chain: Orotidine 5'-phosphate decarboxylase (231 aa).

Residues Asp12, Lys34, 61-70 (DMKLLDIDNT), Thr116, Arg177, Gln186, Gly206, and Arg207 each bind substrate. The active-site Proton donor is Lys63.

Belongs to the OMP decarboxylase family. Type 1 subfamily. Homodimer.

It carries out the reaction orotidine 5'-phosphate + H(+) = UMP + CO2. The protein operates within pyrimidine metabolism; UMP biosynthesis via de novo pathway; UMP from orotate: step 2/2. Functionally, catalyzes the decarboxylation of orotidine 5'-monophosphate (OMP) to uridine 5'-monophosphate (UMP). The sequence is that of Orotidine 5'-phosphate decarboxylase from Allorhizobium ampelinum (strain ATCC BAA-846 / DSM 112012 / S4) (Agrobacterium vitis (strain S4)).